A 513-amino-acid polypeptide reads, in one-letter code: ATP synthase subunit alpha (513 aa).

169-176 (GDRQTGKT) contributes to the ATP binding site.

Belongs to the ATPase alpha/beta chains family. In terms of assembly, F-type ATPases have 2 components, CF(1) - the catalytic core - and CF(0) - the membrane proton channel. CF(1) has five subunits: alpha(3), beta(3), gamma(1), delta(1), epsilon(1). CF(0) has three main subunits: a(1), b(2) and c(9-12). The alpha and beta chains form an alternating ring which encloses part of the gamma chain. CF(1) is attached to CF(0) by a central stalk formed by the gamma and epsilon chains, while a peripheral stalk is formed by the delta and b chains.

The protein resides in the cell inner membrane. The enzyme catalyses ATP + H2O + 4 H(+)(in) = ADP + phosphate + 5 H(+)(out). Its function is as follows. Produces ATP from ADP in the presence of a proton gradient across the membrane. The alpha chain is a regulatory subunit. The chain is ATP synthase subunit alpha from Haemophilus influenzae (strain 86-028NP).